Consider the following 163-residue polypeptide: Phosphopantetheine adenylyltransferase (163 aa).

Substrate is bound at residue Thr10. Residues 10 to 11 (TF) and His18 contribute to the ATP site. Positions 42, 74, and 88 each coordinate substrate. ATP-binding positions include 89–91 (GLR), Glu99, and 124–130 (NSFISST).

This sequence belongs to the bacterial CoaD family. Homohexamer. It depends on Mg(2+) as a cofactor.

It is found in the cytoplasm. It catalyses the reaction (R)-4'-phosphopantetheine + ATP + H(+) = 3'-dephospho-CoA + diphosphate. It participates in cofactor biosynthesis; coenzyme A biosynthesis; CoA from (R)-pantothenate: step 4/5. Its function is as follows. Reversibly transfers an adenylyl group from ATP to 4'-phosphopantetheine, yielding dephospho-CoA (dPCoA) and pyrophosphate. The sequence is that of Phosphopantetheine adenylyltransferase from Shewanella sp. (strain MR-4).